The primary structure comprises 553 residues: MKKVTAMLFTMAVGLNAVSMAAKAKATEEQETDVLLIGGGIMSATLGTYLQELEPEWSMTMVERLDGVAQESSNGWNNAGTGHSALMELNYTPKKADGSVSIEKAVDINEAFQVSRQFWAHQVQSGVLHEPHSFINTVPHMSFVWGDDNVNFLRARYTALQQSTLFRGMRYSEDHAQIKEWAPLVMEGRDPKQKVAATRTEIGTDVNYGEITRQLVASLQKKPNFALQLNTEVRGFKRNADNSWTVTVADLKNGEAEHAIKAKFVFIGAGGAALKLLQETGIPEAKDYAGFPVGGQFLVSENPDVVNNHLAKVYGQASVGAPPMSVPHIDTRILDGKRVVLFGPFATFSTKFLKNGSLWDLLSSTTTSNFMPMVNVGMDNFDLVKYLISQVMLSDDERFEALKEYYPQAKKEDWRLWQAGQRVQIIKRDEDKGGVLRLGTEVVSDKDGTIAALLGASPGASTAAPIMLHLMEKVFKEKVASPEWQAKLKTIVPSYGTKLNGNIEATEQELQYTSDVLGLKYDKPQVVDEAPKPQLKPQVQPQPAHKAVADIAL.

The segment covering 534–543 (QLKPQVQPQP) has biased composition (low complexity). Residues 534 to 553 (QLKPQVQPQPAHKAVADIAL) form a disordered region.

This sequence belongs to the MQO family. It depends on FAD as a cofactor.

The catalysed reaction is (S)-malate + a quinone = a quinol + oxaloacetate. It participates in carbohydrate metabolism; tricarboxylic acid cycle; oxaloacetate from (S)-malate (quinone route): step 1/1. The chain is Probable malate:quinone oxidoreductase from Citrobacter koseri (strain ATCC BAA-895 / CDC 4225-83 / SGSC4696).